A 420-amino-acid polypeptide reads, in one-letter code: Exodeoxyribonuclease 7 large subunit (420 aa).

It belongs to the XseA family. Heterooligomer composed of large and small subunits.

The protein localises to the cytoplasm. The catalysed reaction is Exonucleolytic cleavage in either 5'- to 3'- or 3'- to 5'-direction to yield nucleoside 5'-phosphates.. Its function is as follows. Bidirectionally degrades single-stranded DNA into large acid-insoluble oligonucleotides, which are then degraded further into small acid-soluble oligonucleotides. The protein is Exodeoxyribonuclease 7 large subunit of Helicobacter pylori (strain G27).